The chain runs to 357 residues: Putative lipopolysaccharide heptosyltransferase 4 (357 aa).

The catalysed reaction is alpha-D-Glc-(1-&gt;2)-alpha-D-Glc-(1-&gt;3)-[alpha-D-Gal-(1-&gt;6)]-alpha-D-Glc-(1-&gt;3)-[L-alpha-D-Hep-(1-&gt;7)]-4-O-PO3(2-)-L-alpha-D-Hep-(1-&gt;3)-4-O-PO3(2-)-L-alpha-D-Hep-(1-&gt;5)-[alpha-Kdo-(2-&gt;4)]-alpha-Kdo-(2-&gt;6)-lipid A + ADP-L-glycero-beta-D-manno-heptose = lipid A-core + ADP + H(+). Its pathway is bacterial outer membrane biogenesis; LPS core biosynthesis. Transferase involved in the biosynthesis of the core oligosaccharide region of lipopolysaccharide (LPS). May catalyze the addition of the terminal heptose (heptose IV) to the outer-core glucose III, the last step of the lipid A-core oligosaccharide biosynthesis. The sequence is that of Putative lipopolysaccharide heptosyltransferase 4 from Escherichia coli (strain K12).